A 167-amino-acid chain; its full sequence is Dihydrofolate reductase (167 aa).

The 162-residue stretch at 1-162 folds into the DHFR domain; it reads MFISMWAQDK…YPHRFQKWQK (162 aa). NADP(+) is bound by residues A7 and 13–19; that span reads LIGKDGL. D27 is a binding site for substrate. 45–46 serves as a coordination point for NADP(+); the sequence is KT. R58 contacts substrate. NADP(+) contacts are provided by residues 64–65 and 99–106; these read TT and GGSRIFQA. Substrate is bound at residue T117.

The protein belongs to the dihydrofolate reductase family.

The catalysed reaction is (6S)-5,6,7,8-tetrahydrofolate + NADP(+) = 7,8-dihydrofolate + NADPH + H(+). Its pathway is cofactor biosynthesis; tetrahydrofolate biosynthesis; 5,6,7,8-tetrahydrofolate from 7,8-dihydrofolate: step 1/1. Key enzyme in folate metabolism. Catalyzes an essential reaction for de novo glycine and purine synthesis, and for DNA precursor synthesis. The protein is Dihydrofolate reductase (folA) of Enterococcus faecium (Streptococcus faecium).